Reading from the N-terminus, the 1514-residue chain is ABC transporter C family member 5 (1514 aa).

A run of 10 helical transmembrane segments spans residues 16 to 36 (LLELCSVIINLLLFLVFLFAV), 76 to 96 (FGFNLSLLCCLYVLGVQVLVL), 111 to 131 (FVLCFPASQSLAWFVLSFLVL), 142 to 162 (PFLVRIWWFLAFSICLCTMYV), 177 to 197 (SHVVANLAVTPALGFLCFLAW), 312 to 332 (VFAGLNTLVSYVGPYLISYFV), 334 to 354 (YLGGKEIFPHEGYVLAGIFFT), 421 to 441 (WYLHDIWMLPMQIVLALAILY), 446 to 466 (IAAVATLVATIISILVTIPLA), and 533 to 553 (FIFWSSPIFVAAVTFATSIFL). The ABC transmembrane type-1 1 domain occupies 307-588 (AACNAVFAGL…FPDLVSMMAQ (282 aa)). An ABC transporter 1 domain is found at 622 to 845 (IEIKDGVFCW…GTDFKALVSA (224 aa)). 657 to 664 (GTVGSGKS) serves as a coordination point for ATP. Residues 899 to 927 (ASDLKAIKEKKKKAKRSRKKQLVQEEERV) adopt a coiled-coil conformation. 6 helical membrane-spanning segments follow: residues 946–966 (GALIPLIILAQAAFQFLQIAS), 986–1006 (PTLLLIVYTALAFGSSVFIFV), 1078–1098 (IVAVMTNVTWQVFLLVVPVAV), 1117–1137 (IVSIQKSPIIHLFGESIAGAA), 1155–1175 (LLDCFVRPFFCSIAAIEWLCL), and 1180–1200 (LSTLVFAFCMVLLVSFPHGTI). Residues 949-1231 (IPLIILAQAA…WILSFCKLEN (283 aa)) form the ABC transmembrane type-1 2 domain. Residues 1268–1502 (IELVDVKVRY…KSSMFLKLVT (235 aa)) enclose the ABC transporter 2 domain. 1302–1309 (GRTGSGKS) is an ATP binding site.

Belongs to the ABC transporter superfamily. ABCC family. Conjugate transporter (TC 3.A.1.208) subfamily. Ubiquitous, mostly in vascular tissues and epidermis, including guard cells.

The protein localises to the membrane. The enzyme catalyses ATP + H2O + xenobioticSide 1 = ADP + phosphate + xenobioticSide 2.. Its activity is regulated as follows. (E(2)17G) transport activity in negatively regulated by organic anions such as oestradiol-3-sulfate, luteolin-7-O-diglucuronide-4'-O-glucuronide, glycocholate, vanadate and the sulfonylurea glibenclamide, and, to a lower extent, by bafilomycin A1, NH(4)Cl, GSH, GSSG and DNB-GS. Functionally, pump for glutathione S-conjugates. Involved in regulation of K(+) and Na(+) cell content. Mediates resistance to NaCl and Li(+), confers sensitivity to sulfonylurea drugs such as glibenclamide (inducer of stomatal opening), and required for stomatal opening regulation by auxin, abscisic acid (ABA) and external Ca(2+). Transports oestradiol-17-(beta-D-glucuronide) (E(2)17G). Involved in the root auxin content regulation that controls the transition from primary root elongation to lateral root formation. Plays a role in ABA-mediated germination inhibition. High-affinity inositol hexakisphosphate transporter that plays a role in guard cell signaling and phytic acid storage. Required for phytic acid accumulation in developing seeds. Phytic acid is the primary storage form of phosphorus in cereal grains and other plant seeds. In Arabidopsis thaliana (Mouse-ear cress), this protein is ABC transporter C family member 5 (ABCC5).